A 275-amino-acid chain; its full sequence is Large ribosomal subunit protein uL2 (275 aa).

A disordered region spans residues 223 to 275 (VAMNPVDHPHGGGEGRTSGGRHPVSPWGQPTKGYKTRSNKRTDKYIVRRRNKK).

Belongs to the universal ribosomal protein uL2 family. In terms of assembly, part of the 50S ribosomal subunit. Forms a bridge to the 30S subunit in the 70S ribosome.

Functionally, one of the primary rRNA binding proteins. Required for association of the 30S and 50S subunits to form the 70S ribosome, for tRNA binding and peptide bond formation. It has been suggested to have peptidyltransferase activity; this is somewhat controversial. Makes several contacts with the 16S rRNA in the 70S ribosome. The polypeptide is Large ribosomal subunit protein uL2 (Shewanella halifaxensis (strain HAW-EB4)).